Here is a 354-residue protein sequence, read N- to C-terminus: UDP-N-acetylglucosamine--N-acetylmuramyl-(pentapeptide) pyrophosphoryl-undecaprenol N-acetylglucosamine transferase (354 aa).

UDP-N-acetyl-alpha-D-glucosamine is bound by residues threonine 11 to glycine 13, arginine 164, serine 194, and glutamine 289.

It belongs to the glycosyltransferase 28 family. MurG subfamily.

It localises to the cell membrane. The enzyme catalyses di-trans,octa-cis-undecaprenyl diphospho-N-acetyl-alpha-D-muramoyl-L-alanyl-D-glutamyl-meso-2,6-diaminopimeloyl-D-alanyl-D-alanine + UDP-N-acetyl-alpha-D-glucosamine = di-trans,octa-cis-undecaprenyl diphospho-[N-acetyl-alpha-D-glucosaminyl-(1-&gt;4)]-N-acetyl-alpha-D-muramoyl-L-alanyl-D-glutamyl-meso-2,6-diaminopimeloyl-D-alanyl-D-alanine + UDP + H(+). The protein operates within cell wall biogenesis; peptidoglycan biosynthesis. Cell wall formation. Catalyzes the transfer of a GlcNAc subunit on undecaprenyl-pyrophosphoryl-MurNAc-pentapeptide (lipid intermediate I) to form undecaprenyl-pyrophosphoryl-MurNAc-(pentapeptide)GlcNAc (lipid intermediate II). The protein is UDP-N-acetylglucosamine--N-acetylmuramyl-(pentapeptide) pyrophosphoryl-undecaprenol N-acetylglucosamine transferase of Clostridium botulinum (strain Loch Maree / Type A3).